Consider the following 429-residue polypeptide: Zinc finger protein 275 (429 aa).

Residues 31–95 (VSDPSPNTDP…DGKRGSPQNL (65 aa)) form a disordered region. A compositionally biased stretch (polar residues) spans 34–51 (PSPNTDPAKYSESTSATR). Ser-76 carries the phosphoserine modification. Residues 79–89 (FRQHGDSDGKR) show a composition bias toward basic and acidic residues. 2 C2H2-type zinc fingers span residues 101–123 (FACKECGDTFRLKVLLVQHQRVH) and 129–151 (WECGDCGKVFRGVAEFNEHRKSH). The segment at 149–176 (KSHVAAEPQPGPSRALENAAEKREQMER) is disordered. The span at 167–176 (AAEKREQMER) shows a compositional bias: basic and acidic residues. 9 consecutive C2H2-type zinc fingers follow at residues 181–203 (FECEECGKRFKKNAGLSQHLRVH), 209–231 (FDCEECGRSFKVNTHLFRHQKLH), 237–259 (FACKACSRDFLDRQELLKHQRMH), 265–287 (FDCDDCGKSFRGVNGLAEHQRIH), 293–315 (YGCPHCGKLFRRSSELTKHRRIH), 321–343 (YACGQCGKAFRQSSSLLEHARIH), 349–371 (YACGECGKAFRGPSDLIKHRRIH), 377–399 (YECDKCGKAFRRSSGLSRHRRIH), and 405–427 (CECSQCGRVFKRRSALQKHQPTH).

This sequence belongs to the krueppel C2H2-type zinc-finger protein family.

The protein localises to the nucleus. Functionally, may be involved in transcriptional regulation. The protein is Zinc finger protein 275 (ZNF275) of Homo sapiens (Human).